Reading from the N-terminus, the 797-residue chain is LPS-assembly protein LptD (797 aa).

Residues 1-20 (MHTIRCLILSALSVAGAAQA) form the signal peptide. The segment at 23–45 (SQDAAPAGRQPVGSVASPGLEMP) is disordered.

It belongs to the LptD family. As to quaternary structure, component of the lipopolysaccharide transport and assembly complex. Interacts with LptE and LptA.

It localises to the cell outer membrane. In terms of biological role, together with LptE, is involved in the assembly of lipopolysaccharide (LPS) at the surface of the outer membrane. This Bordetella avium (strain 197N) protein is LPS-assembly protein LptD.